We begin with the raw amino-acid sequence, 208 residues long: LexA repressor (208 aa).

A DNA-binding region (H-T-H motif) is located at residues 28-48; sequence RAEIARELGFRSANAAEEHLK. Catalysis depends on for autocatalytic cleavage activity residues Ser125 and Lys162.

The protein belongs to the peptidase S24 family. As to quaternary structure, homodimer.

The catalysed reaction is Hydrolysis of Ala-|-Gly bond in repressor LexA.. Functionally, represses a number of genes involved in the response to DNA damage (SOS response), including recA and lexA. In the presence of single-stranded DNA, RecA interacts with LexA causing an autocatalytic cleavage which disrupts the DNA-binding part of LexA, leading to derepression of the SOS regulon and eventually DNA repair. This Aliivibrio fischeri (strain MJ11) (Vibrio fischeri) protein is LexA repressor.